The sequence spans 358 residues: Pseudouridylate synthase RPUSD4, mitochondrial (358 aa).

The N-terminal 12 residues, 1–12, are a transit peptide targeting the mitochondrion; the sequence is MRHAREVTFARL.

This sequence belongs to the pseudouridine synthase RluA family.

The protein localises to the mitochondrion matrix. It localises to the nucleus. The protein resides in the cytoplasm. It carries out the reaction uridine in 5S rRNA = pseudouridine in 5S rRNA. It catalyses the reaction a uridine in tRNA = a pseudouridine in tRNA. The catalysed reaction is a uridine in mRNA = a pseudouridine in mRNA. Functionally, catalyzes uridine to pseudouridine isomerization (pseudouridylation) of different mitochondrial RNA substrates. Acts on position 1397 in 16S mitochondrial ribosomal RNA (16S mt-rRNA). This modification is required for the assembly of 16S mt-rRNA into a functional mitochondrial ribosome. Acts on position 39 in mitochondrial tRNA(Phe). Also catalyzes pseudouridylation of mRNAs in nucleus: acts as a regulator of pre-mRNA splicing by mediating pseudouridylation of pre-mRNAs at locations associated with alternatively spliced regions. Pseudouridylation of pre-mRNAs near splice sites directly regulates mRNA splicing and mRNA 3'-end processing. The chain is Pseudouridylate synthase RPUSD4, mitochondrial from Danio rerio (Zebrafish).